We begin with the raw amino-acid sequence, 295 residues long: Ethanolamine ammonia-lyase small subunit (295 aa).

Residues valine 207, glutamate 228, and cysteine 258 each contribute to the adenosylcob(III)alamin site.

The protein belongs to the EutC family. The basic unit is a heterodimer which dimerizes to form tetramers. The heterotetramers trimerize; 6 large subunits form a core ring with 6 small subunits projecting outwards. The cofactor is adenosylcob(III)alamin.

Its subcellular location is the bacterial microcompartment. The enzyme catalyses ethanolamine = acetaldehyde + NH4(+). The protein operates within amine and polyamine degradation; ethanolamine degradation. In terms of biological role, catalyzes the deamination of various vicinal amino-alcohols to oxo compounds. Allows this organism to utilize ethanolamine as the sole source of nitrogen and carbon in the presence of external vitamin B12. This Escherichia coli (strain SE11) protein is Ethanolamine ammonia-lyase small subunit.